A 162-amino-acid chain; its full sequence is Peroxiredoxin-2C (162 aa).

The region spanning 4-162 (ITVGDVVPDG…SSAEDILKAL (159 aa)) is the Thioredoxin domain. Cys-51 (cysteine sulfenic acid (-SOH) intermediate) is an active-site residue.

Belongs to the peroxiredoxin family. Prx5 subfamily. In terms of assembly, monomer. In terms of tissue distribution, highly expressed in buds and flowers. Slightly expressed in green tissues. Also detected in pollen.

It localises to the cytoplasm. The enzyme catalyses [glutaredoxin]-dithiol + a hydroperoxide = [glutaredoxin]-disulfide + an alcohol + H2O. Functionally, thiol-specific peroxidase that catalyzes the reduction of hydrogen peroxide and organic hydroperoxides to water and alcohols, respectively. Plays a role in cell protection against oxidative stress by detoxifying peroxides and as sensor of hydrogen peroxide-mediated signaling events. The chain is Peroxiredoxin-2C (PRXIIC) from Arabidopsis thaliana (Mouse-ear cress).